A 140-amino-acid chain; its full sequence is Myrosinase 2 (140 aa).

Arginine 70 functions as the Nucleophile in the catalytic mechanism. 2 N-linked (GlcNAc...) asparagine glycosylation sites follow: asparagine 114 and asparagine 127.

The protein belongs to the glycosyl hydrolase 1 family. Homodimer.

The enzyme catalyses a thioglucoside + H2O = a sugar + a thiol.. With respect to regulation, inhibited by ascorbate. Its function is as follows. Degradation of glucosinolates (glucose residue linked by a thioglucoside bound to an amino acid derivative) to glucose, sulfate and any of the products: thiocyanates, isothiocyanates, nitriles, epithionitriles or oxazolidine-2-thiones. This is Myrosinase 2 from Brevicoryne brassicae (Mealy cabbage aphid).